Reading from the N-terminus, the 216-residue chain is Ras-related protein Rab-2B (216 aa).

Gly-16, Val-17, Gly-18, Lys-19, Ser-20, and Cys-21 together coordinate GDP. Positions 16, 17, 18, 19, 20, 21, and 38 each coordinate GTP. Ser-20 is a Mg(2+) binding site. The Switch 1 motif lies at 37-42 (LTIGVE). Residues Thr-38 and Asp-61 each coordinate Mg(2+). The Switch 2 signature appears at 63 to 72 (AGQESFRSIT). GTP contacts are provided by Gly-64, Asn-119, Lys-120, Asp-122, Ala-150, and Lys-151. Asn-119 lines the GDP pocket. GDP contacts are provided by Asp-122, Ala-150, and Lys-151. Residues 189–216 (PQQSISTSVGPSASQRNSRDIGSNSGCC) form a disordered region. The residue at position 202 (Ser-202) is a Phosphoserine. S-geranylgeranyl cysteine attachment occurs at residues Cys-215 and Cys-216.

This sequence belongs to the small GTPase superfamily. Rab family. As to quaternary structure, interacts (in GTP-bound form) with GARIN4 (via N-terminus). Interacts (in GTP-bound form) with GARIN5A. Interacts (in GTP-bound form) with GARIN1B. Interacts with VPS39 and VPS41. It depends on Mg(2+) as a cofactor. As to expression, expressed in kidney, prostate, lung, liver, thymus, colon, pancreas, and skeletal muscle, and low levels in placenta. Not detected in heart, brain, spleen, testis, ovary, small intestine and leukocyte.

It localises to the cell membrane. It is found in the endoplasmic reticulum membrane. Its subcellular location is the golgi apparatus membrane. The protein localises to the cytoplasmic vesicle. The protein resides in the secretory vesicle. It localises to the acrosome. It is found in the autophagosome membrane. The enzyme catalyses GTP + H2O = GDP + phosphate + H(+). Its activity is regulated as follows. Regulated by guanine nucleotide exchange factors (GEFs) which promote the exchange of bound GDP for free GTP, GTPase activating proteins (GAPs) which increase the GTP hydrolysis activity, and GDP dissociation inhibitors (GDIs) which inhibit the dissociation of the nucleotide from the GTPase. The small GTPases Rab are key regulators of intracellular membrane trafficking, from the formation of transport vesicles to their fusion with membranes. Rabs cycle between active GTP-bound and inactive GDP-bound states. In their active state, drive transport of vesicular carriers from donor organelles to acceptor organelles to regulate the membrane traffic that maintains organelle identity and morphology. Regulates the compacted morphology of the Golgi. Promotes cytosolic DNA-induced innate immune responses. Regulates IFN responses against DNA viruses by regulating the CGAS-STING signaling axis. Together with RAB2A redundantly required for efficient autophagic flux. The chain is Ras-related protein Rab-2B from Homo sapiens (Human).